A 338-amino-acid polypeptide reads, in one-letter code: Ketol-acid reductoisomerase (NADP(+)) (338 aa).

One can recognise a KARI N-terminal Rossmann domain in the interval 1 to 181 (MKVYYENDAD…GGTKAGVIET (181 aa)). NADP(+) is bound by residues 24 to 27 (FGSQ), Lys-47, Ser-50, Ser-52, and 82 to 85 (DQVQ). His-107 is a catalytic residue. Gly-133 provides a ligand contact to NADP(+). Positions 182 to 327 (NFKDETETDL…EKLRGMMSWL (146 aa)) constitute a KARI C-terminal knotted domain. Mg(2+) contacts are provided by Asp-190, Glu-194, Glu-226, and Glu-230. Residue Ser-251 participates in substrate binding.

This sequence belongs to the ketol-acid reductoisomerase family. The cofactor is Mg(2+).

The catalysed reaction is (2R)-2,3-dihydroxy-3-methylbutanoate + NADP(+) = (2S)-2-acetolactate + NADPH + H(+). It catalyses the reaction (2R,3R)-2,3-dihydroxy-3-methylpentanoate + NADP(+) = (S)-2-ethyl-2-hydroxy-3-oxobutanoate + NADPH + H(+). The protein operates within amino-acid biosynthesis; L-isoleucine biosynthesis; L-isoleucine from 2-oxobutanoate: step 2/4. It participates in amino-acid biosynthesis; L-valine biosynthesis; L-valine from pyruvate: step 2/4. In terms of biological role, involved in the biosynthesis of branched-chain amino acids (BCAA). Catalyzes an alkyl-migration followed by a ketol-acid reduction of (S)-2-acetolactate (S2AL) to yield (R)-2,3-dihydroxy-isovalerate. In the isomerase reaction, S2AL is rearranged via a Mg-dependent methyl migration to produce 3-hydroxy-3-methyl-2-ketobutyrate (HMKB). In the reductase reaction, this 2-ketoacid undergoes a metal-dependent reduction by NADPH to yield (R)-2,3-dihydroxy-isovalerate. This is Ketol-acid reductoisomerase (NADP(+)) from Chloroherpeton thalassium (strain ATCC 35110 / GB-78).